A 63-amino-acid chain; its full sequence is Adipokinetic prohormone type 1 (63 aa).

Residues 1–22 (MVQRCLVVALLVVVVAAALCSA) form the signal peptide. Pyrrolidone carboxylic acid is present on Gln23. Threonine amide is present on Thr32.

This sequence belongs to the AKH/HRTH/RPCH family. Adipokinetic hormone precursor-related peptide (APRP) can form three type of disulfide-bond dimers: p1 (alpha-alpha), p2 (alpha-beta), and p3 (beta-beta).

The protein localises to the secreted. This hormone, released from cells in the corpora cardiaca, causes release of diglycerides from the fat body and stimulation of muscles to use these diglycerides as an energy source during energy-demanding processes. The polypeptide is Adipokinetic prohormone type 1 (Schistocerca gregaria (Desert locust)).